Here is a 541-residue protein sequence, read N- to C-terminus: Chaperonin GroEL 2 (541 aa).

Residues 29 to 32 (TLGP), 86 to 90 (DGTTT), glycine 413, 476 to 478 (NAA), and aspartate 492 contribute to the ATP site.

Belongs to the chaperonin (HSP60) family. In terms of assembly, forms a cylinder of 14 subunits composed of two heptameric rings stacked back-to-back. Interacts with the co-chaperonin GroES.

It localises to the secreted. It is found in the capsule. The protein localises to the cell surface. The protein resides in the cell wall. The enzyme catalyses ATP + H2O + a folded polypeptide = ADP + phosphate + an unfolded polypeptide.. In terms of biological role, together with its co-chaperonin GroES, plays an essential role in assisting protein folding. The GroEL-GroES system forms a nano-cage that allows encapsulation of the non-native substrate proteins and provides a physical environment optimized to promote and accelerate protein folding. This Mycolicibacterium paratuberculosis (strain ATCC BAA-968 / K-10) (Mycobacterium paratuberculosis) protein is Chaperonin GroEL 2.